A 43-amino-acid polypeptide reads, in one-letter code: Large ribosomal subunit protein uL5 (43 aa).

The protein belongs to the universal ribosomal protein uL5 family. Part of the 50S ribosomal subunit; part of the 5S rRNA/L5/L18/L25 subcomplex. Contacts the 5S rRNA and the P site tRNA. Forms a bridge to the 30S subunit in the 70S ribosome.

This is one of the proteins that bind and probably mediate the attachment of the 5S RNA into the large ribosomal subunit, where it forms part of the central protuberance. In the 70S ribosome it contacts protein S13 of the 30S subunit (bridge B1b), connecting the 2 subunits; this bridge is implicated in subunit movement. Contacts the P site tRNA; the 5S rRNA and some of its associated proteins might help stabilize positioning of ribosome-bound tRNAs. This Serratia marcescens protein is Large ribosomal subunit protein uL5 (rplE).